A 288-amino-acid chain; its full sequence is Mycothiol S-conjugate amidase (288 aa).

3 residues coordinate Zn(2+): H12, D15, and H142.

It belongs to the MshB deacetylase family. Mca subfamily. As to quaternary structure, monomer. It depends on Zn(2+) as a cofactor.

It catalyses the reaction mycothiol S-conjugate + H2O = an N-acetyl-L-cysteine-S-conjugate + 1D-myo-inositol 2-amino-2-deoxy-alpha-D-glucopyranoside. Partially inhibited by MSH when MSmB is used as substrate. Competitively inhibited by the GlcNAc-cyclohexyl derivative 5-(4-chlorophenyl)-N-((2R,3R,4R,5S,6R)-2-(cyclohexylthio)-tetrahydro-4,5-dihydroxy-6-(hydroxymethyl)-2H-pyran-3-yl)furan-2-carboxamide, which also inhibits MshB. A mycothiol (MSH, N-acetyl-cysteinyl-glucosaminyl-inositol) S-conjugate amidase, it recycles conjugated MSH to the N-acetyl cysteine conjugate and the MSH precursor. Involved in MSH-dependent detoxification of a number of alkylating agents and antibiotics. Activity is specific for the mycothiol moiety. Has a low but measurable deacetylation activity on GlcNAc-Ins (N-acetyl-glucosaminyl-inositol), and thus can also directly contribute to the production of MSH. The sequence is that of Mycothiol S-conjugate amidase from Mycobacterium tuberculosis (strain ATCC 25618 / H37Rv).